A 174-amino-acid polypeptide reads, in one-letter code: MALGSNTKFYETPNHPFQGERIAEEGDLLSRYGLVNKEELWRAQSELRDYRREARRLIGEAQGDTVAAAEAGSEFLARLKRIGVLDDEDSLDDILSLDVTDILERRLQTVAYRKGLGNTPQQARQFIAHGHVTVNGARVSAPSYKVDVAEEGEIEFDETSPLADDLHPERAEGQ.

One can recognise an S4 RNA-binding domain in the interval 105–169 (RRLQTVAYRK…SPLADDLHPE (65 aa)).

Belongs to the universal ribosomal protein uS4 family. Part of the 30S ribosomal subunit. Contacts protein S5. The interaction surface between S4 and S5 is involved in control of translational fidelity.

Its function is as follows. One of the primary rRNA binding proteins, it binds directly to 16S rRNA where it nucleates assembly of the body of the 30S subunit. Functionally, with S5 and S12 plays an important role in translational accuracy. The protein is Small ribosomal subunit protein uS4 of Natronomonas pharaonis (strain ATCC 35678 / DSM 2160 / CIP 103997 / JCM 8858 / NBRC 14720 / NCIMB 2260 / Gabara) (Halobacterium pharaonis).